A 233-amino-acid chain; its full sequence is Uridylate kinase (233 aa).

ATP is bound at residue 9–10; that stretch reads GS. Gly-43 is a UMP binding site. ATP-binding residues include Gly-44 and Arg-48. UMP-binding positions include Asp-65 and 113–119; that span reads VTPGQTT. 3 residues coordinate ATP: Thr-139, Tyr-145, and Asp-148.

This sequence belongs to the UMP kinase family. Homohexamer.

It localises to the cytoplasm. It catalyses the reaction UMP + ATP = UDP + ADP. Its pathway is pyrimidine metabolism; CTP biosynthesis via de novo pathway; UDP from UMP (UMPK route): step 1/1. Its activity is regulated as follows. Inhibited by UTP. Functionally, catalyzes the reversible phosphorylation of UMP to UDP. The sequence is that of Uridylate kinase from Methanosarcina barkeri (strain Fusaro / DSM 804).